The following is a 251-amino-acid chain: Cell division protein ZapD (251 aa).

The protein belongs to the ZapD family. As to quaternary structure, interacts with FtsZ.

The protein localises to the cytoplasm. In terms of biological role, cell division factor that enhances FtsZ-ring assembly. Directly interacts with FtsZ and promotes bundling of FtsZ protofilaments, with a reduction in FtsZ GTPase activity. This Paraburkholderia phytofirmans (strain DSM 17436 / LMG 22146 / PsJN) (Burkholderia phytofirmans) protein is Cell division protein ZapD.